We begin with the raw amino-acid sequence, 376 residues long: Aspartate-semialdehyde dehydrogenase (376 aa).

Residues 11–14 (RGMV), 38–39 (TS), and Gln74 each bind NADP(+). Arg103 contacts phosphate. Cys136 acts as the Acyl-thioester intermediate in catalysis. Gln163 is a binding site for substrate. NADP(+) is bound by residues 166-167 (SG) and Pro194. Residue Glu242 coordinates substrate. Residue Lys245 coordinates phosphate. Arg273 is a substrate binding site. His280 (proton acceptor) is an active-site residue. An NADP(+)-binding site is contributed by Gln356.

This sequence belongs to the aspartate-semialdehyde dehydrogenase family. In terms of assembly, homodimer.

It carries out the reaction L-aspartate 4-semialdehyde + phosphate + NADP(+) = 4-phospho-L-aspartate + NADPH + H(+). It functions in the pathway amino-acid biosynthesis; L-lysine biosynthesis via DAP pathway; (S)-tetrahydrodipicolinate from L-aspartate: step 2/4. It participates in amino-acid biosynthesis; L-methionine biosynthesis via de novo pathway; L-homoserine from L-aspartate: step 2/3. Its pathway is amino-acid biosynthesis; L-threonine biosynthesis; L-threonine from L-aspartate: step 2/5. Catalyzes the NADPH-dependent formation of L-aspartate-semialdehyde (L-ASA) by the reductive dephosphorylation of L-aspartyl-4-phosphate. This is Aspartate-semialdehyde dehydrogenase from Bordetella pertussis (strain Tohama I / ATCC BAA-589 / NCTC 13251).